The primary structure comprises 977 residues: Probable RNA-dependent RNA polymerase 5 (977 aa).

Positions 103–122 are disordered; that stretch reads EEMSVDSDAPSPKSLKSEDK.

Belongs to the RdRP family.

The enzyme catalyses RNA(n) + a ribonucleoside 5'-triphosphate = RNA(n+1) + diphosphate. In terms of biological role, probably involved in the RNA silencing pathway and required for the generation of small interfering RNAs (siRNAs). This Arabidopsis thaliana (Mouse-ear cress) protein is Probable RNA-dependent RNA polymerase 5 (RDR5).